We begin with the raw amino-acid sequence, 842 residues long: Glucans biosynthesis glucosyltransferase H (842 aa).

7 helical membrane passes run 140 to 160, 194 to 214, 513 to 533, 570 to 590, 615 to 635, 656 to 676, and 680 to 700; these read ILLL…KTIL, ILIL…TALM, VFLT…FLAL, LFAS…MLIW, VLLA…AFLG, FMRH…MAWL, and FLFW…VSVV.

The protein belongs to the glycosyltransferase 2 family. OpgH subfamily.

The protein resides in the cell inner membrane. The protein operates within glycan metabolism; osmoregulated periplasmic glucan (OPG) biosynthesis. In terms of biological role, involved in the biosynthesis of osmoregulated periplasmic glucans (OPGs). The protein is Glucans biosynthesis glucosyltransferase H of Citrobacter koseri (strain ATCC BAA-895 / CDC 4225-83 / SGSC4696).